Here is a 273-residue protein sequence, read N- to C-terminus: Undecaprenyl-diphosphatase (273 aa).

8 consecutive transmembrane segments (helical) span residues 4-24 (MELW…FAPV), 48-68 (AANT…VVVF), 89-109 (LNLI…VLFE), 116-136 (LFST…MIAA), 152-172 (ITYK…WPGF), 193-213 (ADFT…LSLL), 222-242 (ADIP…LLAI), and 252-272 (IRLV…YFLY).

The protein belongs to the UppP family.

The protein localises to the cell membrane. It catalyses the reaction di-trans,octa-cis-undecaprenyl diphosphate + H2O = di-trans,octa-cis-undecaprenyl phosphate + phosphate + H(+). Catalyzes the dephosphorylation of undecaprenyl diphosphate (UPP). Confers resistance to bacitracin. This Geobacillus kaustophilus (strain HTA426) protein is Undecaprenyl-diphosphatase.